A 413-amino-acid polypeptide reads, in one-letter code: Multifunctional CCA protein (413 aa).

The ATP site is built by glycine 8 and arginine 11. Residues glycine 8 and arginine 11 each coordinate CTP. Residues glutamate 21 and aspartate 23 each coordinate Mg(2+). Residues arginine 91, arginine 137, and arginine 140 each coordinate ATP. Residues arginine 91, arginine 137, and arginine 140 each contribute to the CTP site. One can recognise an HD domain in the interval cysteine 228–leucine 329.

This sequence belongs to the tRNA nucleotidyltransferase/poly(A) polymerase family. Bacterial CCA-adding enzyme type 1 subfamily. In terms of assembly, monomer. Can also form homodimers and oligomers. Mg(2+) serves as cofactor. It depends on Ni(2+) as a cofactor.

It catalyses the reaction a tRNA precursor + 2 CTP + ATP = a tRNA with a 3' CCA end + 3 diphosphate. It carries out the reaction a tRNA with a 3' CCA end + 2 CTP + ATP = a tRNA with a 3' CCACCA end + 3 diphosphate. Functionally, catalyzes the addition and repair of the essential 3'-terminal CCA sequence in tRNAs without using a nucleic acid template. Adds these three nucleotides in the order of C, C, and A to the tRNA nucleotide-73, using CTP and ATP as substrates and producing inorganic pyrophosphate. tRNA 3'-terminal CCA addition is required both for tRNA processing and repair. Also involved in tRNA surveillance by mediating tandem CCA addition to generate a CCACCA at the 3' terminus of unstable tRNAs. While stable tRNAs receive only 3'-terminal CCA, unstable tRNAs are marked with CCACCA and rapidly degraded. The sequence is that of Multifunctional CCA protein from Acinetobacter baylyi (strain ATCC 33305 / BD413 / ADP1).